The following is a 179-amino-acid chain: Large ribosomal subunit protein uL5 (179 aa).

It belongs to the universal ribosomal protein uL5 family. As to quaternary structure, part of the 50S ribosomal subunit; part of the 5S rRNA/L5/L18/L25 subcomplex. Contacts the 5S rRNA and the P site tRNA. Forms a bridge to the 30S subunit in the 70S ribosome.

This is one of the proteins that bind and probably mediate the attachment of the 5S RNA into the large ribosomal subunit, where it forms part of the central protuberance. In the 70S ribosome it contacts protein S13 of the 30S subunit (bridge B1b), connecting the 2 subunits; this bridge is implicated in subunit movement. Contacts the P site tRNA; the 5S rRNA and some of its associated proteins might help stabilize positioning of ribosome-bound tRNAs. The sequence is that of Large ribosomal subunit protein uL5 from Buchnera aphidicola subsp. Cinara cedri (strain Cc).